Here is an 81-residue protein sequence, read N- to C-terminus: Photosystem I iron-sulfur center (81 aa).

4Fe-4S ferredoxin-type domains lie at 2–31 (AHSV…MIPW) and 39–68 (IASA…VRVY). 8 residues coordinate [4Fe-4S] cluster: cysteine 11, cysteine 14, cysteine 17, cysteine 21, cysteine 48, cysteine 51, cysteine 54, and cysteine 58.

As to quaternary structure, the eukaryotic PSI reaction center is composed of at least 11 subunits. [4Fe-4S] cluster serves as cofactor.

It localises to the plastid. It is found in the chloroplast thylakoid membrane. The enzyme catalyses reduced [plastocyanin] + hnu + oxidized [2Fe-2S]-[ferredoxin] = oxidized [plastocyanin] + reduced [2Fe-2S]-[ferredoxin]. Apoprotein for the two 4Fe-4S centers FA and FB of photosystem I (PSI); essential for photochemical activity. FB is the terminal electron acceptor of PSI, donating electrons to ferredoxin. The C-terminus interacts with PsaA/B/D and helps assemble the protein into the PSI complex. Required for binding of PsaD and PsaE to PSI. PSI is a plastocyanin-ferredoxin oxidoreductase, converting photonic excitation into a charge separation, which transfers an electron from the donor P700 chlorophyll pair to the spectroscopically characterized acceptors A0, A1, FX, FA and FB in turn. The sequence is that of Photosystem I iron-sulfur center from Psilotum nudum (Whisk fern).